The primary structure comprises 162 residues: Shikimate kinase (162 aa).

11–16 (GSGKSS) contacts ATP. Ser-15 lines the Mg(2+) pocket. 3 residues coordinate substrate: Asp-33, Arg-57, and Gly-80. An ATP-binding site is contributed by Arg-116. Residue Arg-132 coordinates substrate.

The protein belongs to the shikimate kinase family. In terms of assembly, monomer. Requires Mg(2+) as cofactor.

The protein resides in the cytoplasm. The enzyme catalyses shikimate + ATP = 3-phosphoshikimate + ADP + H(+). It participates in metabolic intermediate biosynthesis; chorismate biosynthesis; chorismate from D-erythrose 4-phosphate and phosphoenolpyruvate: step 5/7. Its function is as follows. Catalyzes the specific phosphorylation of the 3-hydroxyl group of shikimic acid using ATP as a cosubstrate. The chain is Shikimate kinase from Helicobacter pylori (strain Shi470).